Here is a 490-residue protein sequence, read N- to C-terminus: Protein twist (490 aa).

3 disordered regions span residues 48-74 (QLQH…QHTQ), 98-167 (PSNE…TGGS), and 330-359 (LDGS…ETDE). A compositionally biased stretch (basic residues) spans 54–64 (QHLHSHQHHQQ). Low complexity-rich tracts occupy residues 65-74 (HQQQQQQHTQ) and 104-135 (STSS…NNPS). A compositionally biased stretch (basic residues) spans 339–351 (AFRKPRRRLKRKP). The bHLH domain maps to 362-413 (NQRVMANVRERQRTQSLNDAFKSLQQIIPTLPSDKLSKIQTLKLATRYIDFL).

As to quaternary structure, efficient DNA binding requires dimerization with another bHLH protein. Homodimer.

It localises to the nucleus. In terms of biological role, involved in the establishment and dorsoventral patterning of germ layers in the embryo. The protein is Protein twist of Drosophila erecta (Fruit fly).